The chain runs to 542 residues: Chaperonin GroEL (542 aa).

Residues T29–P32, D86–T90, G413, N477–A479, and D493 each bind ATP.

This sequence belongs to the chaperonin (HSP60) family. As to quaternary structure, forms a cylinder of 14 subunits composed of two heptameric rings stacked back-to-back. Interacts with the co-chaperonin GroES.

The protein localises to the cytoplasm. The enzyme catalyses ATP + H2O + a folded polypeptide = ADP + phosphate + an unfolded polypeptide.. Functionally, together with its co-chaperonin GroES, plays an essential role in assisting protein folding. The GroEL-GroES system forms a nano-cage that allows encapsulation of the non-native substrate proteins and provides a physical environment optimized to promote and accelerate protein folding. The chain is Chaperonin GroEL from Beutenbergia cavernae (strain ATCC BAA-8 / DSM 12333 / CCUG 43141 / JCM 11478 / NBRC 16432 / NCIMB 13614 / HKI 0122).